The following is a 152-amino-acid chain: MASSLNEDPEGSRITYVKGDLFACPKTDSLAHCISEDCRMGAGIAVLFKKKFGGVQELLNQQKKSGEVAVLKRDGRYIYYLITKKRASHKPTYENLQKSLEAMKSHCLKNGVTDLSMPRIGCGLDRLQWENVSAMIEEVFEATDIKITVYTL.

Position 2 is an N-acetylalanine (Ala2). Residues 2–152 (ASSLNEDPEG…TDIKITVYTL (151 aa)) form the Macro domain. Position 4 is a phosphoserine (Ser4). Leu21 lines the substrate pocket. Residue Lys84 is the Nucleophile of the active site. Residues 119–125 (RIGCGLD) and Leu152 contribute to the substrate site. Asp125 acts as the Proton acceptor in catalysis.

As to expression, ubiquitous.

It is found in the nucleus. Its subcellular location is the nucleoplasm. The protein resides in the nucleolus. The protein localises to the chromosome. The enzyme catalyses 2''-O-acetyl-ADP-D-ribose + H2O = ADP-D-ribose + acetate + H(+). It catalyses the reaction 5-O-(ADP-D-ribosyl)-L-glutamyl-[protein] + H2O = L-glutamyl-[protein] + ADP-D-ribose + H(+). The catalysed reaction is alpha-NAD(+) + H2O = ADP-D-ribose + nicotinamide + H(+). Subject to competitive inhibition by the product ADP-ribose. ADP-ribose glycohydrolase that hydrolyzes ADP-ribose and acts on different substrates, such as proteins ADP-ribosylated on glutamate and O-acetyl-ADP-D-ribose. Specifically acts as a glutamate mono-ADP-ribosylhydrolase by mediating the removal of mono-ADP-ribose attached to glutamate residues on proteins. Does not act on poly-ADP-ribosylated proteins: the poly-ADP-ribose chain of poly-ADP-ribosylated glutamate residues must by hydrolyzed into mono-ADP-ribosylated glutamate by PARG to become a substrate for OARD1. Deacetylates O-acetyl-ADP ribose, a signaling molecule generated by the deacetylation of acetylated lysine residues in histones and other proteins. Catalyzes the deacylation of O-acetyl-ADP-ribose, O-propionyl-ADP-ribose and O-butyryl-ADP-ribose, yielding ADP-ribose plus acetate, propionate and butyrate, respectively. This chain is ADP-ribose glycohydrolase OARD1, found in Homo sapiens (Human).